The sequence spans 113 residues: UPF0482 protein YnfB (113 aa).

The N-terminal stretch at 1–28 (MNILSGKLPFLLGAVFAGSVVLATSVQA) is a signal peptide.

Belongs to the UPF0482 family.

The sequence is that of UPF0482 protein YnfB from Escherichia fergusonii (strain ATCC 35469 / DSM 13698 / CCUG 18766 / IAM 14443 / JCM 21226 / LMG 7866 / NBRC 102419 / NCTC 12128 / CDC 0568-73).